The primary structure comprises 210 residues: Putative 4-hydroxy-4-methyl-2-oxoglutarate aldolase (210 aa).

Substrate-binding positions include 87–90 and Arg109; that span reads GDFV. Residue Asp110 coordinates a divalent metal cation.

The protein belongs to the class II aldolase/RraA-like family. In terms of assembly, homotrimer. The cofactor is a divalent metal cation.

The catalysed reaction is 4-hydroxy-4-methyl-2-oxoglutarate = 2 pyruvate. It carries out the reaction oxaloacetate + H(+) = pyruvate + CO2. Functionally, catalyzes the aldol cleavage of 4-hydroxy-4-methyl-2-oxoglutarate (HMG) into 2 molecules of pyruvate. Also contains a secondary oxaloacetate (OAA) decarboxylase activity due to the common pyruvate enolate transition state formed following C-C bond cleavage in the retro-aldol and decarboxylation reactions. This is Putative 4-hydroxy-4-methyl-2-oxoglutarate aldolase from Halalkalibacterium halodurans (strain ATCC BAA-125 / DSM 18197 / FERM 7344 / JCM 9153 / C-125) (Bacillus halodurans).